Consider the following 290-residue polypeptide: Enoyl-CoA hydratase, mitochondrial (290 aa).

The N-terminal 29 residues, 1-29, are a transit peptide targeting the mitochondrion; sequence MAALRALLPRACNSLLSPVRCPEFRRFAS. 98–101 contacts substrate; sequence ADIK. An N6-acetyllysine; alternate mark is found at lysine 101 and lysine 115. Residues lysine 101 and lysine 115 each carry the N6-succinyllysine; alternate modification. Glycine 141 is a substrate binding site. An N6-succinyllysine modification is found at lysine 204. Residue lysine 211 is modified to N6-acetyllysine.

Belongs to the enoyl-CoA hydratase/isomerase family. Homohexamer; dimer of trimers. As to expression, detected in liver (at protein level).

It is found in the mitochondrion matrix. It catalyses the reaction a (3S)-3-hydroxyacyl-CoA = a (2E)-enoyl-CoA + H2O. The enzyme catalyses a (3E)-enoyl-CoA = a 4-saturated (2E)-enoyl-CoA. The catalysed reaction is (3E)-hexenoyl-CoA = (2E)-hexenoyl-CoA. It carries out the reaction (3S)-3-hydroxybutanoyl-CoA = (2E)-butenoyl-CoA + H2O. It catalyses the reaction 3-hydroxyisovaleryl-CoA = 3-methylbut-2-enoyl-CoA + H2O. The enzyme catalyses 3-hydroxypropanoyl-CoA = acryloyl-CoA + H2O. The catalysed reaction is 3-hydroxybutanoyl-CoA = (2E)-butenoyl-CoA + H2O. It carries out the reaction 2-methylpropenoyl-CoA + H2O = (S)-3-hydroxyisobutanoyl-CoA. It catalyses the reaction (3S)-hydroxyhexanoyl-CoA = (2E)-hexenoyl-CoA + H2O. The enzyme catalyses (3S)-hydroxydecanoyl-CoA = (2E)-decenoyl-CoA + H2O. Its pathway is lipid metabolism; fatty acid beta-oxidation. Converts unsaturated trans-2-enoyl-CoA species ((2E)-enoyl-CoA) to the corresponding 3(S)-3-hydroxyacyl-CoA species through addition of a water molecule to the double bond. Catalyzes the hydration of medium- and short-chained fatty enoyl-CoA thioesters from 4 carbons long (C4) up to C16. Has high substrate specificity for crotonyl-CoA ((2E)-butenoyl-CoA) and moderate specificity for acryloyl-CoA, 3-methylcrotonyl-CoA (3-methyl-(2E)-butenoyl-CoA) and methacrylyl-CoA ((2E)-2-methylpropenoyl-CoA). Can bind tiglyl-CoA (2-methylcrotonoyl-CoA), but hydrates only a small amount of this substrate. Plays a key role in the beta-oxidation spiral of short- and medium-chain fatty acid oxidation. At a lower rate than the hydratase reaction, catalyzes the isomerase reaction of trans-3-enoyl-CoA species (such as (3E)-hexenoyl-CoA) to trans-2-enoyl-CoA species (such as (2E)-hexenoyl-CoA), which are subsequently hydrated to 3(S)-3-hydroxyacyl-CoA species (such as (3S)-hydroxyhexanoyl-CoA). The polypeptide is Enoyl-CoA hydratase, mitochondrial (Rattus norvegicus (Rat)).